The chain runs to 158 residues: SsrA-binding protein (158 aa).

Over residues Lys-133–Glu-152 the composition is skewed to basic and acidic residues. The interval Lys-133 to Gly-158 is disordered.

Belongs to the SmpB family.

It is found in the cytoplasm. Required for rescue of stalled ribosomes mediated by trans-translation. Binds to transfer-messenger RNA (tmRNA), required for stable association of tmRNA with ribosomes. tmRNA and SmpB together mimic tRNA shape, replacing the anticodon stem-loop with SmpB. tmRNA is encoded by the ssrA gene; the 2 termini fold to resemble tRNA(Ala) and it encodes a 'tag peptide', a short internal open reading frame. During trans-translation Ala-aminoacylated tmRNA acts like a tRNA, entering the A-site of stalled ribosomes, displacing the stalled mRNA. The ribosome then switches to translate the ORF on the tmRNA; the nascent peptide is terminated with the 'tag peptide' encoded by the tmRNA and targeted for degradation. The ribosome is freed to recommence translation, which seems to be the essential function of trans-translation. In Pseudarthrobacter chlorophenolicus (strain ATCC 700700 / DSM 12829 / CIP 107037 / JCM 12360 / KCTC 9906 / NCIMB 13794 / A6) (Arthrobacter chlorophenolicus), this protein is SsrA-binding protein.